A 159-amino-acid polypeptide reads, in one-letter code: uncharacterized protein (159 aa).

Positions 6–66 (LSKKDWEIIK…YLRFDKLGYT (61 aa)) constitute an HTH asnC-type domain. The H-T-H motif DNA-binding region spans 25–44 (DAEIGRRIGLSKSAVRWRRI).

This is an uncharacterized protein from Pyrococcus horikoshii (strain ATCC 700860 / DSM 12428 / JCM 9974 / NBRC 100139 / OT-3).